The chain runs to 265 residues: uncharacterized protein (265 aa).

2 consecutive CBS domains span residues 9-64 (MTKK…EKVE) and 67-126 (MTKR…TTPK).

This is an uncharacterized protein from Methanocaldococcus jannaschii (strain ATCC 43067 / DSM 2661 / JAL-1 / JCM 10045 / NBRC 100440) (Methanococcus jannaschii).